A 403-amino-acid polypeptide reads, in one-letter code: S-adenosylmethionine synthase (403 aa).

Position 16 (histidine 16) interacts with ATP. Position 18 (aspartate 18) interacts with Mg(2+). Glutamate 44 lines the K(+) pocket. L-methionine-binding residues include glutamate 57 and glutamine 100. Residues 100–110 are flexible loop; that stretch reads QSNDIAQGVDH. ATP-binding positions include 167-169, 238-239, aspartate 247, 253-254, alanine 270, and lysine 274; these read DAK, RF, and RK. Aspartate 247 is a binding site for L-methionine. Lysine 278 serves as a coordination point for L-methionine.

The protein belongs to the AdoMet synthase family. In terms of assembly, homotetramer; dimer of dimers. Requires Mg(2+) as cofactor. The cofactor is K(+).

Its subcellular location is the cytoplasm. The enzyme catalyses L-methionine + ATP + H2O = S-adenosyl-L-methionine + phosphate + diphosphate. Its pathway is amino-acid biosynthesis; S-adenosyl-L-methionine biosynthesis; S-adenosyl-L-methionine from L-methionine: step 1/1. Functionally, catalyzes the formation of S-adenosylmethionine (AdoMet) from methionine and ATP. The overall synthetic reaction is composed of two sequential steps, AdoMet formation and the subsequent tripolyphosphate hydrolysis which occurs prior to release of AdoMet from the enzyme. This is S-adenosylmethionine synthase from Verminephrobacter eiseniae (strain EF01-2).